Consider the following 1406-residue polypeptide: Enhancer of mRNA-decapping protein 4 (1406 aa).

Position 2 is an N-acetylalanine (alanine 2). Residues serine 3 and serine 6 each carry the phosphoserine modification. Lysine 125 carries the N6-acetyllysine modification. WD repeat units follow at residues 174–214 (GFTG…GKIQ), 230–277 (NHFR…SSHN), 295–334 (GHST…QDEP), and 342–393 (PHDG…CLQT). Residues serine 560, serine 565, serine 583, and serine 585 each carry the phosphoserine modification. Disordered stretches follow at residues 604–631 (SLQQ…SSSS) and 667–686 (SLTL…SLLP). The segment covering 609–631 (SASPSSSSSSSSSSSSSSSSSSS) has biased composition (low complexity). Residues serine 680, serine 712, serine 727, and serine 729 each carry the phosphoserine modification. The interval 719 to 744 (EPLGLPQASPSRTRSPDVISSASTAL) is disordered. The segment covering 726–744 (ASPSRTRSPDVISSASTAL) has biased composition (polar residues). Residue threonine 731 is modified to Phosphothreonine. Phosphoserine occurs at positions 733 and 745. Disordered regions lie at residues 782–855 (HLLS…NGLQ) and 873–951 (QRDS…VAEP). 2 stretches are compositionally biased toward polar residues: residues 823 to 832 (EVATPDSQVW) and 841 to 852 (ETCSTLTESPRN). A Phosphothreonine modification is found at threonine 826. Phosphoserine occurs at positions 849 and 876. Threonine 879 is modified (phosphothreonine). Phosphoserine is present on residues serine 880, serine 884, serine 892, serine 895, and serine 897. Phosphothreonine is present on threonine 906. A coiled-coil region spans residues 971–1030 (HNQEELLQRLCAQLEGLQSTVTDHVERALETRHEQEQRRLERALAEGQQRGGQLQEQLTQ). Serine 1385 bears the Phosphoserine mark.

Belongs to the WD repeat EDC4 family. Part of a decapping complex consisting of DCP1A, DCP2, EDC3, EDC4 and probably DDX6. Part of a complex consisting of DCP1A, EDC3, EDC4 and DDX6. Part of a complex consisting of DCP1B, EDC3, EDC4 and DDX6. Interacts with DCP2. Interacts with RC3H1. Interacts with NBDY. Interacts with Tex19.1 and, probably, Tex19.2. Interacts with LSM14A. Interacts with DDX6.

The protein resides in the cytoplasm. The protein localises to the P-body. Its subcellular location is the nucleus. Functionally, in the process of mRNA degradation, seems to play a role in mRNA decapping. Component of a complex containing DCP2 and DCP1A which functions in decapping of ARE-containing mRNAs. Promotes complex formation between DCP1A and DCP2. Enhances the catalytic activity of DCP2 (in vitro). The polypeptide is Enhancer of mRNA-decapping protein 4 (Mus musculus (Mouse)).